A 202-amino-acid polypeptide reads, in one-letter code: GTP cyclohydrolase-2 (202 aa).

GTP is bound at residue 49–53 (RIHSE). Positions 54, 65, and 67 each coordinate Zn(2+). GTP contacts are provided by residues Gln-70, 92 to 94 (EGR), and Thr-114. Residue Asp-126 is the Proton acceptor of the active site. Arg-128 serves as the catalytic Nucleophile. GTP is bound by residues Thr-149 and Lys-154.

This sequence belongs to the GTP cyclohydrolase II family. Requires Zn(2+) as cofactor.

The catalysed reaction is GTP + 4 H2O = 2,5-diamino-6-hydroxy-4-(5-phosphoribosylamino)-pyrimidine + formate + 2 phosphate + 3 H(+). It functions in the pathway cofactor biosynthesis; riboflavin biosynthesis; 5-amino-6-(D-ribitylamino)uracil from GTP: step 1/4. In terms of biological role, catalyzes the conversion of GTP to 2,5-diamino-6-ribosylamino-4(3H)-pyrimidinone 5'-phosphate (DARP), formate and pyrophosphate. This is GTP cyclohydrolase-2 from Shewanella frigidimarina (strain NCIMB 400).